The primary structure comprises 69 residues: uncharacterized protein (69 aa).

The tract at residues 21 to 42 (MYAANKKSDARRRGKVGKEQWE) is disordered. Positions 35-69 (KVGKEQWEKEMEQYNIQKAQFEKELKEKKEKELKK) form a coiled coil.

This is an uncharacterized protein from Acheta domesticus (House cricket).